A 566-amino-acid chain; its full sequence is Sorting nexin lst-4 (566 aa).

In terms of domain architecture, SH3 spans 1 to 61 (MAQVKAEYDF…PESYVTPYQA (61 aa)). The interval 59–179 (YQASRPPPVL…DRGSNKVNKN (121 aa)) is disordered. The span at 63 to 77 (RPPPVLPPPLPPTSS) shows a compositional bias: pro residues. Positions 127–140 (DDFDDEWTDEDDEQ) are enriched in acidic residues. Residues 143–154 (TRPNVQSSIGSN) show a composition bias toward polar residues. Residues 155-173 (SRRDLSRSHSEHGGPDRGS) show a composition bias toward basic and acidic residues. One can recognise a PX domain in the interval 227-339 (YTCIVDKPKK…HFISCTDEKD (113 aa)). Residues 362 to 566 (TVPHQPLDPN…KLTSLAARYD (205 aa)) form the BAR domain.

The protein belongs to the sorting nexin family. Homodimer. Isoform d interacts (via SH3 domain) with dyn-1. As to expression, expressed in vulval precursor cells (VPCs) and apoptotic germ cells. Colocalizes with actin, dyn-1 and rab-5 in early phagosomes.

The protein localises to the cytoplasm. It is found in the cytoplasmic vesicle. The protein resides in the phagosome membrane. Its function is as follows. Involved in the signaling of vulval development by acting as a negative regulator of epidermal growth factor receptor (EGFR) signaling. Aids in phagosomal membrane tubule formation which is required for phagosomal fusion with endosomes and lysosomes. Also recruits rab-7 to phagosomes by an interaction with dyn-1. These are events leading to phagosome maturation which is a step in apoptotic cell corpse clearance. Binds phosphatidylinositol-3,4,5-trisphosphate. This Caenorhabditis elegans protein is Sorting nexin lst-4.